Consider the following 350-residue polypeptide: Protein RecA (350 aa).

68-75 (GPESSGKT) serves as a coordination point for ATP.

This sequence belongs to the RecA family.

It is found in the cytoplasm. In terms of biological role, can catalyze the hydrolysis of ATP in the presence of single-stranded DNA, the ATP-dependent uptake of single-stranded DNA by duplex DNA, and the ATP-dependent hybridization of homologous single-stranded DNAs. It interacts with LexA causing its activation and leading to its autocatalytic cleavage. This Symbiobacterium thermophilum (strain DSM 24528 / JCM 14929 / IAM 14863 / T) protein is Protein RecA.